A 266-amino-acid polypeptide reads, in one-letter code: Putative carbamate hydrolase RutD (266 aa).

An AB hydrolase-1 domain is found at 15-128 (AVLLSSGLGG…NAHSARCFDA (114 aa)).

Belongs to the AB hydrolase superfamily. Hydrolase RutD family.

The enzyme catalyses carbamate + 2 H(+) = NH4(+) + CO2. Involved in pyrimidine catabolism. May facilitate the hydrolysis of carbamate, a reaction that can also occur spontaneously. This is Putative carbamate hydrolase RutD from Variovorax paradoxus (strain S110).